A 390-amino-acid chain; its full sequence is Homeobox protein Meis1 (390 aa).

Positions Gly-108–Gly-192 constitute an MEIS N-terminal domain. Over residues Arg-190–Thr-202 the composition is skewed to basic and acidic residues. The segment at Arg-190–Phe-279 is disordered. The span at Arg-203–Trp-213 shows a compositional bias: polar residues. Positions Arg-272–Met-334 form a DNA-binding region, homeobox; TALE-type. Residues Tyr-299–Arg-329 form an interaction with DNA region. The interval Ile-335–Met-390 is required for transcriptional activation.

It belongs to the TALE/MEIS homeobox family. In terms of assembly, interacts with the N-terminal region of PBX1 to form a heterodimer which binds DNA including a cAMP-responsive sequence in CYP17. Also forms heterodimers with PBX2. Forms heterotrimers with PBX1 or PBX2 and a number of HOX proteins including HOXA9, HOXD4 and HOXD9 where it acts as a non-DNA-binding partner. Also forms heterotrimers with PBX1 and HOX proteins including HOXD9 and HOXD10 where PBX1 is the non-DNA-binding partner. Heterodimer with DLX3. Heterodimer with HOXB13. Expressed at high levels in the lung with lower levels detected in the heart and brain. Expressed in pancreatic islets (beta-cells and non-beta-cells).

The protein resides in the nucleus. Acts as a transcriptional regulator of PAX6. Also acts as a transcriptional activator of PF4 in complex with PBX1 or PBX2. Required for hematopoiesis, megakaryocyte lineage development and vascular patterning. May function as a cofactor for HOXA7 and HOXA9 in the induction of myeloid leukemias. This chain is Homeobox protein Meis1 (Meis1), found in Mus musculus (Mouse).